The chain runs to 294 residues: N-acetylmuramic acid 6-phosphate etherase (294 aa).

The SIS domain occupies 54–217; sequence VIQSFEEEGR…STASMIGVGK (164 aa). The Proton donor role is filled by glutamate 82. Residue glutamate 113 is part of the active site.

This sequence belongs to the GCKR-like family. MurNAc-6-P etherase subfamily. In terms of assembly, homodimer.

The enzyme catalyses N-acetyl-D-muramate 6-phosphate + H2O = N-acetyl-D-glucosamine 6-phosphate + (R)-lactate. It participates in amino-sugar metabolism; N-acetylmuramate degradation. In terms of biological role, specifically catalyzes the cleavage of the D-lactyl ether substituent of MurNAc 6-phosphate, producing GlcNAc 6-phosphate and D-lactate. The sequence is that of N-acetylmuramic acid 6-phosphate etherase from Bacillus anthracis (strain A0248).